The sequence spans 193 residues: uncharacterized protein (193 aa).

This is an uncharacterized protein from Dictyostelium discoideum (Social amoeba).